The following is a 553-amino-acid chain: Chaperonin GroEL (553 aa).

ATP is bound by residues 29–32, lysine 50, 86–90, glycine 424, and aspartate 504; these read TLGP and DGTTT.

Belongs to the chaperonin (HSP60) family. Forms a cylinder of 14 subunits composed of two heptameric rings stacked back-to-back. Interacts with the co-chaperonin GroES.

The protein resides in the cytoplasm. The enzyme catalyses ATP + H2O + a folded polypeptide = ADP + phosphate + an unfolded polypeptide.. Functionally, together with its co-chaperonin GroES, plays an essential role in assisting protein folding. The GroEL-GroES system forms a nano-cage that allows encapsulation of the non-native substrate proteins and provides a physical environment optimized to promote and accelerate protein folding. The chain is Chaperonin GroEL from Koribacter versatilis (strain Ellin345).